Consider the following 899-residue polypeptide: Solute carrier family 12 member 9 (899 aa).

Topologically, residues 1–44 (MTSESSPLLHYRLFSVSDGGLGPPDSSPIMTDAVTVGTGPTQRK) are cytoplasmic. The helical transmembrane segment at 45 to 65 (LSTFFGVVVPTVLSMFSIVVF) threads the bilayer. At 66-80 (MRIGFVVGHAGLLQS) the chain is on the extracellular side. The chain crosses the membrane as a helical span at residues 81-101 (LLMLFVAYVIIWLTVLSVCAI). The Cytoplasmic portion of the chain corresponds to 102–127 (STNGAVQGGGAYFMISRTLGPEFGGS). The chain crosses the membrane as a helical span at residues 128 to 148 (IGLMFYLANVFACGVYVLGLV). Over 149–176 (EAVLDVFGRDPSDVTDSLRSLPQGYGYS) the chain is Extracellular. The helical transmembrane segment at 177-197 (FLYASIILLLCMAICLVGASI) threads the bilayer. The Cytoplasmic segment spans residues 198–202 (YSQAS). The helical transmembrane segment at 203 to 223 (FFIFLLVFVVLLTILISFLAV) threads the bilayer. The Extracellular portion of the chain corresponds to 224 to 266 (RPLTVSIRHGGNVTMTGVYTGINSSTLHNNLQADYSLDYTTGN). 2 N-linked (GlcNAc...) asparagine glycosylation sites follow: Asn235 and Asn246. A helical transmembrane segment spans residues 267–287 (LMNFATVFAVMFNGCTGIMAG). At 288-304 (CNLSGELKQPSRSIPMG) the chain is on the cytoplasmic side. A helical membrane pass occupies residues 305–325 (TIIAVIITFFVYLILFIFTAF). Over 326–347 (TCDRTLLREDYGFFRSINIWPP) the chain is Extracellular. The chain crosses the membrane as a helical span at residues 348 to 368 (FVLIGVYATSLSASMSTLIGA). Residues 369–393 (SRILHALAKDDLFGVLLAPAKLVSK) are Cytoplasmic-facing. The helical transmembrane segment at 394–414 (GGNPWGAVVYTWALVQLVLLA) threads the bilayer. The Extracellular segment spans residues 415–419 (GKLNT). The helical transmembrane segment at 420–440 (IAGIVTVFYLIAYAAIDLACL) threads the bilayer. Residues 441–469 (ALEWASAPNFRPTFRFFSWHTCLLGILSS) lie on the Cytoplasmic side of the membrane. Residues 470–490 (LVMMFLINPAYASGSIVLLLL) form a helical membrane-spanning segment. Over 491-739 (LLGSIHFRSS…PLDLLRPQAS (249 aa)) the chain is Extracellular. The helical transmembrane segment at 740–760 (AYVDVCSLFLLQMACILNMAA) threads the bilayer. Topologically, residues 761 to 899 (SWRRYQLRVF…GLTPVTCTEL (139 aa)) are cytoplasmic.

Belongs to the SLC12A transporter family.

Its subcellular location is the cell membrane. The protein resides in the lysosome membrane. Its function is as follows. Seems to correspond to a subunit of a multimeric transport system and thus, additional subunits may be required for its function. May play a role in lysosomal ion flux and osmoregulation. This is Solute carrier family 12 member 9 (slc12a9) from Xenopus laevis (African clawed frog).